Consider the following 62-residue polypeptide: Protein DsrB (62 aa).

The protein belongs to the DsrB family.

The chain is Protein DsrB from Citrobacter koseri (strain ATCC BAA-895 / CDC 4225-83 / SGSC4696).